Here is a 53-residue protein sequence, read N- to C-terminus: uncharacterized protein (53 aa).

A helical transmembrane segment spans residues 20–42 (ILFPVLLVFDTILIVVGIALILF).

The protein resides in the membrane. This is an uncharacterized protein from Archaeoglobus fulgidus (strain ATCC 49558 / DSM 4304 / JCM 9628 / NBRC 100126 / VC-16).